A 745-amino-acid polypeptide reads, in one-letter code: Phosphoribosylformylglycinamidine synthase subunit PurL (745 aa).

The active site involves His-47. ATP is bound by residues Tyr-50 and Lys-90. Residue Glu-92 coordinates Mg(2+). Substrate is bound by residues 93–96 (SHNH) and Arg-115. His-94 acts as the Proton acceptor in catalysis. Asp-116 lines the Mg(2+) pocket. Gln-240 is a binding site for substrate. Residue Asp-268 coordinates Mg(2+). 312 to 314 (ESQ) serves as a coordination point for substrate. Asn-501 and Gly-538 together coordinate ATP. Asn-539 provides a ligand contact to Mg(2+). Ser-541 lines the substrate pocket.

It belongs to the FGAMS family. In terms of assembly, monomer. Part of the FGAM synthase complex composed of 1 PurL, 1 PurQ and 2 PurS subunits.

It is found in the cytoplasm. The enzyme catalyses N(2)-formyl-N(1)-(5-phospho-beta-D-ribosyl)glycinamide + L-glutamine + ATP + H2O = 2-formamido-N(1)-(5-O-phospho-beta-D-ribosyl)acetamidine + L-glutamate + ADP + phosphate + H(+). The protein operates within purine metabolism; IMP biosynthesis via de novo pathway; 5-amino-1-(5-phospho-D-ribosyl)imidazole from N(2)-formyl-N(1)-(5-phospho-D-ribosyl)glycinamide: step 1/2. Its function is as follows. Part of the phosphoribosylformylglycinamidine synthase complex involved in the purines biosynthetic pathway. Catalyzes the ATP-dependent conversion of formylglycinamide ribonucleotide (FGAR) and glutamine to yield formylglycinamidine ribonucleotide (FGAM) and glutamate. The FGAM synthase complex is composed of three subunits. PurQ produces an ammonia molecule by converting glutamine to glutamate. PurL transfers the ammonia molecule to FGAR to form FGAM in an ATP-dependent manner. PurS interacts with PurQ and PurL and is thought to assist in the transfer of the ammonia molecule from PurQ to PurL. This Leptospira borgpetersenii serovar Hardjo-bovis (strain JB197) protein is Phosphoribosylformylglycinamidine synthase subunit PurL.